A 188-amino-acid polypeptide reads, in one-letter code: Guanylate kinase (188 aa).

In terms of domain architecture, Guanylate kinase-like spans 2 to 183 (TKLIIISAPS…CVEQIRKAIA (182 aa)). 9-16 (APSGTGKS) is an ATP binding site.

The protein belongs to the guanylate kinase family.

Its subcellular location is the cytoplasm. The catalysed reaction is GMP + ATP = GDP + ADP. Its function is as follows. Essential for recycling GMP and indirectly, cGMP. The polypeptide is Guanylate kinase (Porphyromonas gingivalis (strain ATCC BAA-308 / W83)).